Here is a 181-residue protein sequence, read N- to C-terminus: TATA-box-binding protein (181 aa).

2 repeat units span residues isoleucine 7–leucine 83 and valine 98–leucine 173.

Belongs to the TBP family.

In terms of biological role, general factor that plays a role in the activation of archaeal genes transcribed by RNA polymerase. Binds specifically to the TATA box promoter element which lies close to the position of transcription initiation. This is TATA-box-binding protein from Methanococcus vannielii (strain ATCC 35089 / DSM 1224 / JCM 13029 / OCM 148 / SB).